A 231-amino-acid polypeptide reads, in one-letter code: Lipoprotein-releasing system ATP-binding protein LolD (231 aa).

The 225-residue stretch at 6-230 folds into the ABC transporter domain; the sequence is LSCKNVSKKY…DGELELVINS (225 aa). 42-49 is an ATP binding site; the sequence is GLSGSGKT.

The protein belongs to the ABC transporter superfamily. Lipoprotein translocase (TC 3.A.1.125) family. The complex is composed of two ATP-binding proteins (LolD) and two transmembrane proteins (LolC and LolE).

The protein resides in the cell inner membrane. Functionally, part of the ABC transporter complex LolCDE involved in the translocation of mature outer membrane-directed lipoproteins, from the inner membrane to the periplasmic chaperone, LolA. Responsible for the formation of the LolA-lipoprotein complex in an ATP-dependent manner. The sequence is that of Lipoprotein-releasing system ATP-binding protein LolD from Francisella tularensis subsp. holarctica (strain OSU18).